Reading from the N-terminus, the 377-residue chain is Nitric oxide reductase FlRd-NAD(+) reductase (377 aa).

It belongs to the FAD-dependent oxidoreductase family. The cofactor is FAD.

Its subcellular location is the cytoplasm. The catalysed reaction is 2 reduced [nitric oxide reductase rubredoxin domain] + NAD(+) + H(+) = 2 oxidized [nitric oxide reductase rubredoxin domain] + NADH. It functions in the pathway nitrogen metabolism; nitric oxide reduction. Its function is as follows. One of at least two accessory proteins for anaerobic nitric oxide (NO) reductase. Reduces the rubredoxin moiety of NO reductase. This chain is Nitric oxide reductase FlRd-NAD(+) reductase, found in Klebsiella pneumoniae subsp. pneumoniae (strain ATCC 700721 / MGH 78578).